The following is a 145-amino-acid chain: D-aminoacyl-tRNA deacylase (145 aa).

The Gly-cisPro motif, important for rejection of L-amino acids motif lies at Gly-137–Pro-138.

It belongs to the DTD family. Homodimer.

It localises to the cytoplasm. The enzyme catalyses glycyl-tRNA(Ala) + H2O = tRNA(Ala) + glycine + H(+). It catalyses the reaction a D-aminoacyl-tRNA + H2O = a tRNA + a D-alpha-amino acid + H(+). Functionally, an aminoacyl-tRNA editing enzyme that deacylates mischarged D-aminoacyl-tRNAs. Also deacylates mischarged glycyl-tRNA(Ala), protecting cells against glycine mischarging by AlaRS. Acts via tRNA-based rather than protein-based catalysis; rejects L-amino acids rather than detecting D-amino acids in the active site. By recycling D-aminoacyl-tRNA to D-amino acids and free tRNA molecules, this enzyme counteracts the toxicity associated with the formation of D-aminoacyl-tRNA entities in vivo and helps enforce protein L-homochirality. The polypeptide is D-aminoacyl-tRNA deacylase (Lactobacillus delbrueckii subsp. bulgaricus (strain ATCC 11842 / DSM 20081 / BCRC 10696 / JCM 1002 / NBRC 13953 / NCIMB 11778 / NCTC 12712 / WDCM 00102 / Lb 14)).